Consider the following 208-residue polypeptide: Large ribosomal subunit protein bL25 (208 aa).

The segment at Val-184–Asp-208 is disordered. The span at Ser-187–Asp-208 shows a compositional bias: low complexity.

The protein belongs to the bacterial ribosomal protein bL25 family. CTC subfamily. In terms of assembly, part of the 50S ribosomal subunit; part of the 5S rRNA/L5/L18/L25 subcomplex. Contacts the 5S rRNA. Binds to the 5S rRNA independently of L5 and L18.

This is one of the proteins that binds to the 5S RNA in the ribosome where it forms part of the central protuberance. This is Large ribosomal subunit protein bL25 from Ehrlichia ruminantium (strain Gardel).